The chain runs to 95 residues: Large ribosomal subunit protein uL23c (95 aa).

The protein belongs to the universal ribosomal protein uL23 family. As to quaternary structure, part of the 50S ribosomal subunit.

The protein localises to the plastid. It is found in the chloroplast. Functionally, binds to 23S rRNA. The protein is Large ribosomal subunit protein uL23c (rpl23) of Guillardia theta (Cryptophyte).